Here is a 200-residue protein sequence, read N- to C-terminus: Riboflavin kinase (200 aa).

Positions 1-20 (MATARPSIVGPDSGPESPFP) are disordered. The Mg(2+) site is built by Thr-42 and Asn-44. Residue Glu-110 is the Nucleophile of the active site.

It belongs to the flavokinase family. It depends on Zn(2+) as a cofactor. Mg(2+) is required as a cofactor.

The enzyme catalyses riboflavin + ATP = FMN + ADP + H(+). It participates in cofactor biosynthesis; FMN biosynthesis; FMN from riboflavin (ATP route): step 1/1. Its function is as follows. Catalyzes the phosphorylation of riboflavin (vitamin B2) to form flavin mononucleotide (FMN) coenzyme. This chain is Riboflavin kinase (FMN1), found in Pyricularia oryzae (strain 70-15 / ATCC MYA-4617 / FGSC 8958) (Rice blast fungus).